We begin with the raw amino-acid sequence, 328 residues long: Reticulocalbin-3 (328 aa).

A signal peptide spans 1–20 (MMWRWTLMLLLLLLRHWALG). A disordered region spans residues 24–48 (PDAGPHGQDRVHHGTPLSEAPHDDA). EF-hand domains lie at 75–112 (ESQA…TQQR), 113–148 (HIRD…HYEP), 163–198 (KMLA…EEFP), 200–235 (MRDI…AEPG), 241–276 (WVQT…PSQD), and 277–312 (QPLV…FVGS). Residues Asp92, Asp94, Trp96, Glu101, Asp126, Asp128, Asp130, Arg132, and Glu137 each contribute to the Ca(2+) site. Residue Asn140 is glycosylated (N-linked (GlcNAc...) asparagine). Positions 176, 178, 180, 182, 187, 213, 215, 217, 219, 224, 254, 256, 258, 260, 265, 290, 292, 294, 296, and 301 each coordinate Ca(2+). Positions 325–328 (HDEL) match the Prevents secretion from ER motif.

This sequence belongs to the CREC family. As to quaternary structure, interacts with PCSK6 (immature form including the propeptide); probably involved in the maturation and the secretion of PCSK6. Post-translationally, N-glycosylated. Degraded by PCSK6 and other endoproteases including FURIN and PCSK5.

It is found in the endoplasmic reticulum lumen. Probable molecular chaperone assisting protein biosynthesis and transport in the endoplasmic reticulum. Required for the proper biosynthesis and transport of pulmonary surfactant-associated protein A/SP-A, pulmonary surfactant-associated protein D/SP-D and the lipid transporter ABCA3. By regulating both the proper expression and the degradation through the endoplasmic reticulum-associated protein degradation pathway of these proteins plays a crucial role in pulmonary surfactant homeostasis. Has an anti-fibrotic activity by negatively regulating the secretion of type I and type III collagens. This calcium-binding protein also transiently associates with immature PCSK6 and regulates its secretion. The sequence is that of Reticulocalbin-3 from Rattus norvegicus (Rat).